Here is a 441-residue protein sequence, read N- to C-terminus: GTPase Der (441 aa).

EngA-type G domains lie at 2–164 (HKVA…PADD) and 173–343 (IRIS…DKWQ). GTP contacts are provided by residues 8–15 (GRPNVGKS), 55–59 (DTGGL), 116–119 (NKID), 179–186 (GRPNVGKS), 226–230 (DTAGI), and 288–291 (NKWD).

It belongs to the TRAFAC class TrmE-Era-EngA-EngB-Septin-like GTPase superfamily. EngA (Der) GTPase family. In terms of assembly, associates with the 50S ribosomal subunit.

Its function is as follows. GTPase that plays an essential role in the late steps of ribosome biogenesis. The polypeptide is GTPase Der (Deinococcus deserti (strain DSM 17065 / CIP 109153 / LMG 22923 / VCD115)).